We begin with the raw amino-acid sequence, 544 residues long: Light-independent protochlorophyllide reductase subunit B (544 aa).

Position 36 (Asp-36) interacts with [4Fe-4S] cluster. The active-site Proton donor is the Asp-286. 421–422 (GM) serves as a coordination point for substrate.

The protein belongs to the ChlB/BchB/BchZ family. In terms of assembly, protochlorophyllide reductase is composed of three subunits; BchL, BchN and BchB. Forms a heterotetramer of two BchB and two BchN subunits. [4Fe-4S] cluster is required as a cofactor.

It carries out the reaction chlorophyllide a + oxidized 2[4Fe-4S]-[ferredoxin] + 2 ADP + 2 phosphate = protochlorophyllide a + reduced 2[4Fe-4S]-[ferredoxin] + 2 ATP + 2 H2O. The protein operates within porphyrin-containing compound metabolism; bacteriochlorophyll biosynthesis (light-independent). Functionally, component of the dark-operative protochlorophyllide reductase (DPOR) that uses Mg-ATP and reduced ferredoxin to reduce ring D of protochlorophyllide (Pchlide) to form chlorophyllide a (Chlide). This reaction is light-independent. The NB-protein (BchN-BchB) is the catalytic component of the complex. The sequence is that of Light-independent protochlorophyllide reductase subunit B from Chloroflexus aggregans (strain MD-66 / DSM 9485).